The primary structure comprises 429 residues: Adenylosuccinate synthetase (429 aa).

GTP is bound by residues 12–18 and 40–42; these read GDEGKGK and GHT. The active-site Proton acceptor is the aspartate 13. Mg(2+) is bound by residues aspartate 13 and glycine 40. Residues 13 to 16, 38 to 41, threonine 128, arginine 142, glutamine 223, threonine 238, and arginine 302 contribute to the IMP site; these read DEGK and NAGH. The active-site Proton donor is histidine 41. 298 to 304 is a substrate binding site; sequence VNTGRPR. Residues arginine 304, 330–332, and 412–414 contribute to the GTP site; these read KLD and GVG.

The protein belongs to the adenylosuccinate synthetase family. In terms of assembly, homodimer. Mg(2+) is required as a cofactor.

It is found in the cytoplasm. The enzyme catalyses IMP + L-aspartate + GTP = N(6)-(1,2-dicarboxyethyl)-AMP + GDP + phosphate + 2 H(+). Its pathway is purine metabolism; AMP biosynthesis via de novo pathway; AMP from IMP: step 1/2. In terms of biological role, plays an important role in the de novo pathway of purine nucleotide biosynthesis. Catalyzes the first committed step in the biosynthesis of AMP from IMP. The polypeptide is Adenylosuccinate synthetase (Corynebacterium urealyticum (strain ATCC 43042 / DSM 7109)).